The primary structure comprises 37 residues: Large ribosomal subunit protein bL36A (37 aa).

The protein belongs to the bacterial ribosomal protein bL36 family.

The protein is Large ribosomal subunit protein bL36A of Clavibacter sepedonicus (Clavibacter michiganensis subsp. sepedonicus).